The primary structure comprises 207 residues: GTP cyclohydrolase 1 (207 aa).

Zn(2+) is bound by residues Cys88, His91, and Cys162.

It belongs to the GTP cyclohydrolase I family. In terms of assembly, toroid-shaped homodecamer, composed of two pentamers of five dimers.

It catalyses the reaction GTP + H2O = 7,8-dihydroneopterin 3'-triphosphate + formate + H(+). It participates in cofactor biosynthesis; 7,8-dihydroneopterin triphosphate biosynthesis; 7,8-dihydroneopterin triphosphate from GTP: step 1/1. The chain is GTP cyclohydrolase 1 from Sulfurisphaera tokodaii (strain DSM 16993 / JCM 10545 / NBRC 100140 / 7) (Sulfolobus tokodaii).